We begin with the raw amino-acid sequence, 342 residues long: Dihydroorotase (342 aa).

Residues His13 and His15 each contribute to the Zn(2+) site. Residues 15–17 (HLR) and Asn41 each bind substrate. Residues Lys98, His135, and His173 each coordinate Zn(2+). Lys98 is modified (N6-carboxylysine). His135 is a substrate binding site. Leu218 lines the substrate pocket. Asp246 provides a ligand contact to Zn(2+). Residue Asp246 is part of the active site. The substrate site is built by His250 and Ala262.

Belongs to the metallo-dependent hydrolases superfamily. DHOase family. Class II DHOase subfamily. As to quaternary structure, homodimer. Requires Zn(2+) as cofactor.

The catalysed reaction is (S)-dihydroorotate + H2O = N-carbamoyl-L-aspartate + H(+). It functions in the pathway pyrimidine metabolism; UMP biosynthesis via de novo pathway; (S)-dihydroorotate from bicarbonate: step 3/3. In terms of biological role, catalyzes the reversible cyclization of carbamoyl aspartate to dihydroorotate. This is Dihydroorotase from Aliivibrio fischeri (strain ATCC 700601 / ES114) (Vibrio fischeri).